Reading from the N-terminus, the 97-residue chain is YcgL domain-containing protein Avin_32960 (97 aa).

Residues 3–87 (CICSIYKSPR…PEEEYVEHLP (85 aa)) form the YcgL domain.

This Azotobacter vinelandii (strain DJ / ATCC BAA-1303) protein is YcgL domain-containing protein Avin_32960.